Here is a 64-residue protein sequence, read N- to C-terminus: Alpha-conotoxin-like Ac1.1a (64 aa).

Residues 1–21 (MGMRMMFTLFLLVVLTTTVVS) form the signal peptide. Positions 22 to 47 (YPSDSASDGRDDEAKDERSDMYELKR) are excised as a propeptide. Cystine bridges form between Cys51-Cys56 and Cys52-Cys62. Cys62 is subject to Cysteine amide.

This sequence belongs to the conotoxin A superfamily. In terms of tissue distribution, expressed by the venom duct.

The protein localises to the secreted. Its function is as follows. Alpha-conotoxins act on postsynaptic membranes, they bind to the nicotinic acetylcholine receptors (nAChR) and thus inhibit them. This Conus achatinus (Little frog cone) protein is Alpha-conotoxin-like Ac1.1a.